The sequence spans 708 residues: Polyribonucleotide nucleotidyltransferase (708 aa).

Positions 487 and 493 each coordinate Mg(2+). In terms of domain architecture, KH spans 554-613 (PRIHTMKISADKIKDVIGKGGAVIRALTEETGTTIEIEDDGTIKIAATEGAAAKEAIRRI). In terms of domain architecture, S1 motif spans 623–691 (GVIYTGKVAR…RQGRVRLSMK (69 aa)).

Belongs to the polyribonucleotide nucleotidyltransferase family. As to quaternary structure, component of the RNA degradosome, which is a multiprotein complex involved in RNA processing and mRNA degradation. It depends on Mg(2+) as a cofactor.

It localises to the cytoplasm. It carries out the reaction RNA(n+1) + phosphate = RNA(n) + a ribonucleoside 5'-diphosphate. Its function is as follows. Involved in mRNA degradation. Catalyzes the phosphorolysis of single-stranded polyribonucleotides processively in the 3'- to 5'-direction. The chain is Polyribonucleotide nucleotidyltransferase from Vibrio vulnificus (strain CMCP6).